The sequence spans 480 residues: Adenosylhomocysteinase (480 aa).

Residues T63, D142, and E203 each contribute to the substrate site. An NAD(+)-binding site is contributed by T204 to T206. Residues K233 and D237 each contribute to the substrate site. NAD(+) contacts are provided by residues N238, G267–G272, E290, N325, I346–H348, and N394.

This sequence belongs to the adenosylhomocysteinase family. NAD(+) is required as a cofactor.

It localises to the cytoplasm. It catalyses the reaction S-adenosyl-L-homocysteine + H2O = L-homocysteine + adenosine. The protein operates within amino-acid biosynthesis; L-homocysteine biosynthesis; L-homocysteine from S-adenosyl-L-homocysteine: step 1/1. May play a key role in the regulation of the intracellular concentration of adenosylhomocysteine. This Xanthomonas oryzae pv. oryzae (strain PXO99A) protein is Adenosylhomocysteinase.